The sequence spans 222 residues: Deoxyribose-phosphate aldolase (222 aa).

Catalysis depends on Asp-93, which acts as the Proton donor/acceptor. The Schiff-base intermediate with acetaldehyde role is filled by Lys-156. Catalysis depends on Lys-186, which acts as the Proton donor/acceptor.

This sequence belongs to the DeoC/FbaB aldolase family. DeoC type 1 subfamily.

The protein resides in the cytoplasm. It catalyses the reaction 2-deoxy-D-ribose 5-phosphate = D-glyceraldehyde 3-phosphate + acetaldehyde. It functions in the pathway carbohydrate degradation; 2-deoxy-D-ribose 1-phosphate degradation; D-glyceraldehyde 3-phosphate and acetaldehyde from 2-deoxy-alpha-D-ribose 1-phosphate: step 2/2. Functionally, catalyzes a reversible aldol reaction between acetaldehyde and D-glyceraldehyde 3-phosphate to generate 2-deoxy-D-ribose 5-phosphate. The polypeptide is Deoxyribose-phosphate aldolase (Corynebacterium glutamicum (strain ATCC 13032 / DSM 20300 / JCM 1318 / BCRC 11384 / CCUG 27702 / LMG 3730 / NBRC 12168 / NCIMB 10025 / NRRL B-2784 / 534)).